We begin with the raw amino-acid sequence, 360 residues long: Probable ribonucleoside-diphosphate reductase small subunit 376L (360 aa).

Residues Asp-67, Glu-98, and His-101 each coordinate Fe cation. Residue Tyr-105 is part of the active site. Fe cation is bound by residues Glu-172, Glu-206, and His-209.

This sequence belongs to the ribonucleoside diphosphate reductase small chain family. As to quaternary structure, heterotetramer composed of a homodimer of the large subunit (R1) and a homodimer of the small subunit (R2). Larger multisubunit protein complex are also active, composed of (R1)n(R2)n. It depends on Fe cation as a cofactor.

It catalyses the reaction a 2'-deoxyribonucleoside 5'-diphosphate + [thioredoxin]-disulfide + H2O = a ribonucleoside 5'-diphosphate + [thioredoxin]-dithiol. Its function is as follows. Ribonucleoside-diphosphate reductase holoenzyme provides the precursors necessary for viral DNA synthesis. Allows virus growth in non-dividing cells. Catalyzes the biosynthesis of deoxyribonucleotides from the corresponding ribonucleotides. The chain is Probable ribonucleoside-diphosphate reductase small subunit 376L from Acheta domesticus (House cricket).